Reading from the N-terminus, the 353-residue chain is Polyadenylate-binding protein-interacting protein 10 (353 aa).

Residues 1–61 (MAVAENAGVK…IDSTPETDDR (61 aa)) form a disordered region. Residues 20 to 31 (NNNTAASATETT) are compositionally biased toward low complexity. The short motif at 96 to 106 (KLNPMAQEFVP) is the PAM2-like element. Positions 128–159 (AAPPKLADGNDHFPRRRRSFGQGKRRMNKRTS) are disordered. Residues 141–156 (PRRRRSFGQGKRRMNK) show a composition bias toward basic residues. The Bipartite nuclear localization signal motif lies at 142–153 (RRRRSFGQGKRR). RRM domains are found at residues 169-244 (RTVY…PSKT) and 266-341 (RTVY…PSKT).

In terms of tissue distribution, expressed in cauline leaves, stems, rosette leaves, immature siliques and primary inflorescences.

It localises to the nucleus. This Arabidopsis thaliana (Mouse-ear cress) protein is Polyadenylate-binding protein-interacting protein 10 (CID10).